We begin with the raw amino-acid sequence, 489 residues long: ATF/CREB activator 1 (489 aa).

The 64-residue stretch at 384-447 folds into the bZIP domain; sequence AWKRARLLER…QKMKKISRLH (64 aa). The basic motif stretch occupies residues 386-406; it reads KRARLLERNRIAASKCRQRKK. A leucine-zipper region spans residues 412–419; the sequence is LQREFDQI.

This sequence belongs to the bZIP family.

Its subcellular location is the nucleus. Transcriptional activator of promoters containing ATF/CREB sites. Can independently stimulate transcription through ATF/CREB sites. Important for a variety of biological functions including growth on non-optimal carbon sources. Regulates the expression of COS8. Has efficient silencing blocking activities. In Saccharomyces cerevisiae (strain ATCC 204508 / S288c) (Baker's yeast), this protein is ATF/CREB activator 1 (ACA1).